Here is a 473-residue protein sequence, read N- to C-terminus: Serine palmitoyltransferase 1 (473 aa).

The Lumenal segment spans residues 1–15 (MATATEQWVLVEMVQ). Positions 1–66 (MATATEQWVL…KEELIEEWQP (66 aa)) are interaction with SPTLC2. A helical membrane pass occupies residues 16-36 (ALYEAPAYHLILEGILILWII). Residues 37 to 473 (RLLFSKTYKL…IKEVAQAVLL (437 aa)) are Cytoplasmic-facing. At Y164 the chain carries Phosphotyrosine; by ABL.

The protein belongs to the class-II pyridoxal-phosphate-dependent aminotransferase family. As to quaternary structure, component of the serine palmitoyltransferase (SPT) complex, which is also composed of SPTLC2 or SPTLC3 and SPTSSA or SPTSSB. The heterodimer consisting of SPTLC1 and SPTLC2/SPTLC3 forms the catalytic core of the enzyme, while SPTSSA or SPTSSB subunits determine substrate specificity. SPT also interacts with ORMDL proteins, especially ORMDL3, which negatively regulate SPT activity in the presence of ceramides. Forms dimers of heterodimers with SPTLC2. Interacts with RTN4 (isoform B). Pyridoxal 5'-phosphate serves as cofactor. In terms of processing, phosphorylation at Tyr-164 inhibits activity and promotes cell survival. Widely expressed. Not detected in small intestine.

It localises to the endoplasmic reticulum membrane. It carries out the reaction L-serine + hexadecanoyl-CoA + H(+) = 3-oxosphinganine + CO2 + CoA. The catalysed reaction is octadecanoyl-CoA + L-serine + H(+) = 3-oxoeicosasphinganine + CO2 + CoA. The enzyme catalyses tetradecanoyl-CoA + L-serine + H(+) = 3-oxohexadecasphinganine + CO2 + CoA. It catalyses the reaction dodecanoyl-CoA + L-serine + H(+) = 3-oxotetradecasphinganine + CO2 + CoA. It functions in the pathway lipid metabolism; sphingolipid metabolism. SPT complex catalytic activity is negatively regulated by ORMDL proteins, including ORMDL3, in the presence of ceramides. This mechanism allows to maintain ceramide levels at sufficient concentrations for the production of complex sphingolipids, but which prevents the accumulation of ceramides to levels that trigger apoptosis. Component of the serine palmitoyltransferase multisubunit enzyme (SPT) that catalyzes the initial and rate-limiting step in sphingolipid biosynthesis by condensing L-serine and activated acyl-CoA (most commonly palmitoyl-CoA) to form long-chain bases. The SPT complex is also composed of SPTLC2 or SPTLC3 and SPTSSA or SPTSSB. Within this complex, the heterodimer with SPTLC2 or SPTLC3 forms the catalytic core. The composition of the serine palmitoyltransferase (SPT) complex determines the substrate preference. The SPTLC1-SPTLC2-SPTSSA complex shows a strong preference for C16-CoA substrate, while the SPTLC1-SPTLC3-SPTSSA isozyme uses both C14-CoA and C16-CoA as substrates, with a slight preference for C14-CoA. The SPTLC1-SPTLC2-SPTSSB complex shows a strong preference for C18-CoA substrate, while the SPTLC1-SPTLC3-SPTSSB isozyme displays an ability to use a broader range of acyl-CoAs, without apparent preference. Required for adipocyte cell viability and metabolic homeostasis. The chain is Serine palmitoyltransferase 1 (SPTLC1) from Homo sapiens (Human).